The following is an 833-amino-acid chain: Coiled-coil domain-containing protein 110 (833 aa).

Residues 431–778 (LQNYLKESVQ…REYLNLSDKI (348 aa)) adopt a coiled-coil conformation.

It is found in the nucleus. This chain is Coiled-coil domain-containing protein 110 (CCDC110), found in Macaca fascicularis (Crab-eating macaque).